The following is a 332-amino-acid chain: Trans-2'-carboxybenzalpyruvate hydratase-aldolase (332 aa).

The active-site Schiff-base intermediate with substrate is Lys178.

It belongs to the DapA family. In terms of assembly, homotrimer.

The catalysed reaction is (3Z)-4-(2-carboxyphenyl)-2-oxobut-3-enoate + H2O = 2-formylbenzoate + pyruvate. With respect to regulation, not inhibited by sodium borohydride or sodium pyruvate. Unaffected by EDTA, EGTA, Mn(2+), Mg(2+) and Ca(2+). In terms of biological role, plays a role in phenanthrene catabolism. Catalyzes the transformation of trans-2'-carboxbenzalpyruvate to 2-formylbenzoate and pyruvate. The protein is Trans-2'-carboxybenzalpyruvate hydratase-aldolase of Nocardioides sp. (strain KP7).